Reading from the N-terminus, the 301-residue chain is Intraflagellar transport protein 46 homolog (301 aa).

Acidic residues-rich tracts occupy residues 1-12 (MADNSSDEYEED) and 30-52 (ENDD…DDEE). The segment at 1–66 (MADNSSDEYE…LEGAYDPADY (66 aa)) is disordered. T283 is modified (phosphothreonine).

Belongs to the IFT46 family. Component of the IFT complex B, at least composed of IFT20, IFT22, IFT25, IFT27, IFT46, IFT52, TRAF3IP1/IFT54, IFT57, IFT74, IFT80, IFT81, and IFT88. Interacts with IFT57, IFT88 and DAW1. Interacts with ARL13B. Interacts with IFT56. Interacts with TTC25. Interacts with IFT70B. Strongly expressed in ovary and testis, moderately expressed in kidney and brain, and weakly expressed in thymus, heart, lung, liver, spleen and muscle. Expressed in embryonic bone and cartilage, with high expression in non-hypertrophic chondrocytes and weaker expression in hypertrophic chondrocytes.

It is found in the cytoplasm. The protein localises to the cytoskeleton. Its subcellular location is the cilium basal body. It localises to the cell projection. The protein resides in the cilium. In terms of biological role, forms part of a complex involved in intraflagellar transport (IFT), the bi-directional movement of particles required for the assembly, maintenance and functioning of primary cilia. May play a role in chondrocyte maturation and skeletogenesis. The protein is Intraflagellar transport protein 46 homolog (Ift46) of Mus musculus (Mouse).